Reading from the N-terminus, the 363-residue chain is Adenosine deaminase (363 aa).

2 residues coordinate Zn(2+): histidine 42 and histidine 44. Residues 44–46, aspartate 172, and glycine 201 contribute to the a purine D-ribonucleoside site; that span reads HLD. The gating helix loop; regulates binding affinity for substrates and thus substrate selectivity stretch occupies residues 170-184; sequence IGDTGHEAANIKASA. Histidine 226 contributes to the Zn(2+) binding site. Residues glutamate 229, histidine 253, and aspartate 310 each coordinate a purine D-ribonucleoside. Aspartate 310 contacts Zn(2+).

This sequence belongs to the metallo-dependent hydrolases superfamily. Adenosine and AMP deaminases family. It depends on Zn(2+) as a cofactor.

It catalyses the reaction adenosine + H2O + H(+) = inosine + NH4(+). The catalysed reaction is S-methyl-5'-thioadenosine + H2O + H(+) = S-methyl-5'-thioinosine + NH4(+). It participates in purine metabolism; purine nucleoside salvage. Its activity is regulated as follows. Inhibited by coformycin and methylthiocoformycin (MT-coformycin). In terms of biological role, catalyzes the hydrolytic deamination of adenosine to produce inosine. Unlike mammalian adenosine deaminases, also catalyzes the deamination of 5'-methylthioadenosine (MTA), a by-product of polyamine biosynthesis, to produce 5'-methylthioinosine (MTI). Plays an essential role in the purine salvage pathway which allows the parasite to use host cell purines for the synthesis of nucleic acids. The polypeptide is Adenosine deaminase (Plasmodium cynomolgi (strain B)).